Consider the following 364-residue polypeptide: Protein leg1b (364 aa).

A signal peptide spans 1 to 22 (MSEMGFLRSVAAVLLLAVFSHA). N-linked (GlcNAc...) asparagine glycosylation occurs at N70.

It belongs to the LEG1 family. In terms of tissue distribution, detected in all tissues tested, with the highest levels in serum (at protein level). At mRNA level, only expressed in liver.

The protein localises to the secreted. Its function is as follows. Involved in early development of liver, exocrine pancreas and intestine, probably through cell cycle regulation. In liver, its function is partially redundant with leg1a function. In Danio rerio (Zebrafish), this protein is Protein leg1b.